The sequence spans 156 residues: Ribosomal RNA large subunit methyltransferase H (156 aa).

Residues L73, G104, and 123-128 (LSPLTL) each bind S-adenosyl-L-methionine.

This sequence belongs to the RNA methyltransferase RlmH family. In terms of assembly, homodimer.

It is found in the cytoplasm. The enzyme catalyses pseudouridine(1915) in 23S rRNA + S-adenosyl-L-methionine = N(3)-methylpseudouridine(1915) in 23S rRNA + S-adenosyl-L-homocysteine + H(+). Its function is as follows. Specifically methylates the pseudouridine at position 1915 (m3Psi1915) in 23S rRNA. The polypeptide is Ribosomal RNA large subunit methyltransferase H (Photorhabdus laumondii subsp. laumondii (strain DSM 15139 / CIP 105565 / TT01) (Photorhabdus luminescens subsp. laumondii)).